Consider the following 100-residue polypeptide: Small ribosomal subunit protein uS14c (100 aa).

Belongs to the universal ribosomal protein uS14 family. In terms of assembly, part of the 30S ribosomal subunit.

The protein resides in the plastid. It is found in the chloroplast. Its function is as follows. Binds 16S rRNA, required for the assembly of 30S particles. The sequence is that of Small ribosomal subunit protein uS14c from Aethionema grandiflorum (Persian stone-cress).